A 1406-amino-acid chain; its full sequence is DNA-directed RNA polymerase subunit beta' (1406 aa).

4 residues coordinate Zn(2+): C70, C72, C85, and C88. Residues D460, D462, and D464 each contribute to the Mg(2+) site. Zn(2+) contacts are provided by C814, C888, C895, and C898.

It belongs to the RNA polymerase beta' chain family. In terms of assembly, the RNAP catalytic core consists of 2 alpha, 1 beta, 1 beta' and 1 omega subunit. When a sigma factor is associated with the core the holoenzyme is formed, which can initiate transcription. It depends on Mg(2+) as a cofactor. Requires Zn(2+) as cofactor.

The catalysed reaction is RNA(n) + a ribonucleoside 5'-triphosphate = RNA(n+1) + diphosphate. Its function is as follows. DNA-dependent RNA polymerase catalyzes the transcription of DNA into RNA using the four ribonucleoside triphosphates as substrates. The sequence is that of DNA-directed RNA polymerase subunit beta' from Yersinia enterocolitica serotype O:8 / biotype 1B (strain NCTC 13174 / 8081).